A 736-amino-acid chain; its full sequence is Catalase-peroxidase (736 aa).

The tryptophyl-tyrosyl-methioninium (Trp-Tyr) (with M-250) cross-link spans 96–224 (WHSAGTYRTG…LAAVQMGLIY (129 aa)). His97 acts as the Proton acceptor in catalysis. A cross-link (tryptophyl-tyrosyl-methioninium (Tyr-Met) (with W-96)) is located at residues 224 to 250 (YVNPEGPDGNPDPVASGRDVRETFGRM). Heme b is bound at residue His265.

It belongs to the peroxidase family. Peroxidase/catalase subfamily. In terms of assembly, homodimer or homotetramer. Requires heme b as cofactor. Post-translationally, formation of the three residue Trp-Tyr-Met cross-link is important for the catalase, but not the peroxidase activity of the enzyme.

The catalysed reaction is H2O2 + AH2 = A + 2 H2O. The enzyme catalyses 2 H2O2 = O2 + 2 H2O. Bifunctional enzyme with both catalase and broad-spectrum peroxidase activity. The protein is Catalase-peroxidase of Pelobacter propionicus (strain DSM 2379 / NBRC 103807 / OttBd1).